We begin with the raw amino-acid sequence, 593 residues long: High affinity cGMP-specific 3',5'-cyclic phosphodiesterase 9A (593 aa).

Residues 87–142 (SAGVEDKRTTSRGQSAERPLRDRRVVGLEQPRREGAFESGQVEPRPREPQGCCQEG) form a disordered region. Over residues 104-122 (RPLRDRRVVGLEQPRREGA) the composition is skewed to basic and acidic residues. Residues 236–557 (PRRDVPTYPK…DRYEELKRID (322 aa)) form the PDEase domain. His-312 serves as the catalytic Proton donor. 312-316 (HNFRH) provides a ligand contact to 3',5'-cyclic GMP. His-316, His-352, and Asp-353 together coordinate Zn(2+). Asp-353 is a binding site for 3',5'-cyclic GMP. Asp-353 contacts Mg(2+). A Phosphoserine modification is found at Ser-379. Residues Asp-462, Tyr-484, and 512 to 513 (AQ) each bind 3',5'-cyclic GMP. A Zn(2+)-binding site is contributed by Asp-462. Residues 564–593 (QKKTDSLTSGATEKSRERSRDVKNSEGDCA) form a disordered region. A compositionally biased stretch (basic and acidic residues) spans 576-593 (EKSRERSRDVKNSEGDCA).

This sequence belongs to the cyclic nucleotide phosphodiesterase family. PDE9 subfamily. Homodimer. It depends on Zn(2+) as a cofactor. Mg(2+) is required as a cofactor.

It is found in the cell projection. The protein localises to the ruffle membrane. Its subcellular location is the cytoplasm. The protein resides in the perinuclear region. It localises to the golgi apparatus. It is found in the endoplasmic reticulum. The protein localises to the cell membrane. Its subcellular location is the sarcolemma. It catalyses the reaction 3',5'-cyclic GMP + H2O = GMP + H(+). Its pathway is purine metabolism; 3',5'-cyclic GMP degradation; GMP from 3',5'-cyclic GMP: step 1/1. Specifically inhibited by a compound named 3r ((R)-2-((1-cyclopentyl-4-hydroxy-1H-pyrazolo[3,4-d]pyrimidin-6- yl)amino)-N-(4-methoxyphenyl)propanamide); the inhibitor forms a hydrogen bond with Tyr-484, Ala-512 and Gln-513. In terms of biological role, specifically hydrolyzes the second messenger cGMP, which is a key regulator of many important physiological processes. Highly specific: compared to other members of the cyclic nucleotide phosphodiesterase family, has the highest affinity and selectivity for cGMP. Specifically regulates natriuretic-peptide-dependent cGMP signaling in heart, acting as a regulator of cardiac hypertrophy in myocytes and muscle. Does not regulate nitric oxide-dependent cGMP in heart. Additional experiments are required to confirm whether its ability to hydrolyze natriuretic-peptide-dependent cGMP is specific to heart or is a general feature of the protein. In brain, involved in cognitive function, such as learning and long-term memory. This chain is High affinity cGMP-specific 3',5'-cyclic phosphodiesterase 9A (PDE9A), found in Pan troglodytes (Chimpanzee).